Reading from the N-terminus, the 505-residue chain is L-carnitine/gamma-butyrobetaine antiporter (505 aa).

12 helical membrane-spanning segments follow: residues 10–30 (IEPKVFFPPLIIVGILCWLTV), 51–71 (WGWAFEWYMIVMLFGWFWLVF), 92–112 (IFMMFASCTSAAVLFWGSIEI), 143–163 (GPLPWATYSFLSVAFAYFFFV), 195–215 (FYLVALIFAMGTSLGLATPLV), 231–251 (LDAIIITCWIILNAICVACGL), 263–283 (SYLSFLMLGWVFIVSGASFIM), 316–336 (WTVFYWAWWVIYAIQMSIFLA), 347–367 (LCFGMVMGLTASTWILWTVLG), 403–423 (LSTATMWGFFILCFIATVTLI), 446–466 (LLVRIGWSVLVGIIGIVLLAL), and 475–495 (AIIAGGCPLFFVNIMVTLSFI).

This sequence belongs to the BCCT transporter (TC 2.A.15) family. CaiT subfamily. Homotrimer.

It is found in the cell inner membrane. The enzyme catalyses 4-(trimethylamino)butanoate(in) + (R)-carnitine(out) = 4-(trimethylamino)butanoate(out) + (R)-carnitine(in). Its pathway is amine and polyamine metabolism; carnitine metabolism. Its function is as follows. Catalyzes the exchange of L-carnitine for gamma-butyrobetaine. The chain is L-carnitine/gamma-butyrobetaine antiporter from Salmonella paratyphi A (strain ATCC 9150 / SARB42).